The following is a 198-amino-acid chain: Putative pseudouridine methyltransferase (198 aa).

Residues Met132 and Cys186 each coordinate S-adenosyl-L-methionine.

This sequence belongs to the methyltransferase superfamily. TrmY family.

Its subcellular location is the cytoplasm. This is Putative pseudouridine methyltransferase from Photobacterium profundum (strain SS9).